A 320-amino-acid chain; its full sequence is Short-chain dehydrogenase TIC 32 B, chloroplastic (320 aa).

Residues 40-46 (GGTSGIG), 92-93 (DL), asparagine 119, and threonine 140 contribute to the NADP(+) site. Substrate is bound at residue serine 174. The Proton acceptor role is filled by tyrosine 196. An interaction with calmodulin region spans residues 301 to 317 (DTTLADKLWDFSIKLVD).

It belongs to the short-chain dehydrogenases/reductases (SDR) family. In terms of assembly, part of the Tic complex.

It localises to the plastid. The protein resides in the chloroplast inner membrane. Involved in protein precursor import into chloroplasts. The polypeptide is Short-chain dehydrogenase TIC 32 B, chloroplastic (Brassica napus (Rape)).